The chain runs to 320 residues: 4-hydroxythreonine-4-phosphate dehydrogenase (320 aa).

Residue T132 participates in substrate binding. The a divalent metal cation site is built by H161, H205, and H258. The substrate site is built by K266, N275, and R284.

Belongs to the PdxA family. In terms of assembly, homodimer. Requires a divalent metal cation as cofactor.

The protein localises to the cytoplasm. The enzyme catalyses 4-(phosphooxy)-L-threonine + NAD(+) = 3-amino-2-oxopropyl phosphate + CO2 + NADH. The protein operates within cofactor biosynthesis; pyridoxine 5'-phosphate biosynthesis; pyridoxine 5'-phosphate from D-erythrose 4-phosphate: step 4/5. Its function is as follows. Catalyzes the NAD(P)-dependent oxidation of 4-(phosphooxy)-L-threonine (HTP) into 2-amino-3-oxo-4-(phosphooxy)butyric acid which spontaneously decarboxylates to form 3-amino-2-oxopropyl phosphate (AHAP). This chain is 4-hydroxythreonine-4-phosphate dehydrogenase, found in Aquifex aeolicus (strain VF5).